Reading from the N-terminus, the 396-residue chain is Elongation factor Tu (396 aa).

Residues 10-206 (KLHVNVGTIG…ALDTHIPNPE (197 aa)) enclose the tr-type G domain. The segment at 19 to 26 (GHVDHGKT) is G1. 19–26 (GHVDHGKT) serves as a coordination point for GTP. Thr-26 lines the Mg(2+) pocket. The tract at residues 60–64 (GITIS) is G2. The segment at 81 to 84 (DCPG) is G3. GTP contacts are provided by residues 81–85 (DCPGH) and 136–139 (NKAD). The segment at 136–139 (NKAD) is G4. Residues 174-176 (SAL) form a G5 region.

This sequence belongs to the TRAFAC class translation factor GTPase superfamily. Classic translation factor GTPase family. EF-Tu/EF-1A subfamily. As to quaternary structure, monomer.

It is found in the cytoplasm. The enzyme catalyses GTP + H2O = GDP + phosphate + H(+). In terms of biological role, GTP hydrolase that promotes the GTP-dependent binding of aminoacyl-tRNA to the A-site of ribosomes during protein biosynthesis. This is Elongation factor Tu from Xylella fastidiosa (strain 9a5c).